A 346-amino-acid chain; its full sequence is NADH-cytochrome b5 reductase 2 (346 aa).

Residues 28-50 form a helical membrane-spanning segment; it reads GGSNAALYAGLAAAAGAGAYYFL. The FAD-binding FR-type domain maps to 95-200; the sequence is QGFISLKLDS…KGPIPKYPWS (106 aa). 203 to 238 contributes to the FAD binding site; it reads KHDHIALIAGGTGITPMYQLARAIFNNPADKTKVTL.

The protein belongs to the flavoprotein pyridine nucleotide cytochrome reductase family. It depends on FAD as a cofactor.

The protein localises to the mitochondrion outer membrane. It catalyses the reaction 2 Fe(III)-[cytochrome b5] + NADH = 2 Fe(II)-[cytochrome b5] + NAD(+) + H(+). May mediate the reduction of outer membrane cytochrome b5. This Botryotinia fuckeliana (strain B05.10) (Noble rot fungus) protein is NADH-cytochrome b5 reductase 2 (mcr1).